Consider the following 267-residue polypeptide: Formamidopyrimidine-DNA glycosylase (267 aa).

Residue Pro-2 is the Schiff-base intermediate with DNA of the active site. The active-site Proton donor is the Glu-3. Catalysis depends on Lys-58, which acts as the Proton donor; for beta-elimination activity. The DNA site is built by His-91, Arg-110, and Arg-152. An FPG-type zinc finger spans residues 233-267; the sequence is DVYGRGTDACTRCGGALEEIRLGNRSTVFCPRCQT. The active-site Proton donor; for delta-elimination activity is Arg-257.

It belongs to the FPG family. Monomer. Zn(2+) serves as cofactor.

It carries out the reaction Hydrolysis of DNA containing ring-opened 7-methylguanine residues, releasing 2,6-diamino-4-hydroxy-5-(N-methyl)formamidopyrimidine.. The enzyme catalyses 2'-deoxyribonucleotide-(2'-deoxyribose 5'-phosphate)-2'-deoxyribonucleotide-DNA = a 3'-end 2'-deoxyribonucleotide-(2,3-dehydro-2,3-deoxyribose 5'-phosphate)-DNA + a 5'-end 5'-phospho-2'-deoxyribonucleoside-DNA + H(+). Functionally, involved in base excision repair of DNA damaged by oxidation or by mutagenic agents. Acts as a DNA glycosylase that recognizes and removes damaged bases. Has a preference for oxidized purines, such as 7,8-dihydro-8-oxoguanine (8-oxoG). Has AP (apurinic/apyrimidinic) lyase activity and introduces nicks in the DNA strand. Cleaves the DNA backbone by beta-delta elimination to generate a single-strand break at the site of the removed base with both 3'- and 5'-phosphates. This chain is Formamidopyrimidine-DNA glycosylase, found in Geobacter metallireducens (strain ATCC 53774 / DSM 7210 / GS-15).